A 146-amino-acid chain; its full sequence is MKIYVDADACPVKDVIIFEATNAEIPVTLVTSFSHYSNAEQPKGVETIYVDSGADAADYRIMQLAKKEDLIVTQDYGLASLALAKGCIVLHHKGYKYTNDNIEQLLQTRYLSAMVRKSGKRTKGPKPFTAEDKEKFRALFKSMIAL.

It belongs to the UPF0178 family.

The chain is UPF0178 protein BC_3040 from Bacillus cereus (strain ATCC 14579 / DSM 31 / CCUG 7414 / JCM 2152 / NBRC 15305 / NCIMB 9373 / NCTC 2599 / NRRL B-3711).